We begin with the raw amino-acid sequence, 248 residues long: 2,3-bisphosphoglycerate-dependent phosphoglycerate mutase (248 aa).

Substrate contacts are provided by residues 9-16 (RHGHSEWN), 22-23 (TG), Arg-61, 88-91 (ERHY), Lys-99, 115-116 (RR), and 183-184 (GN). His-10 serves as the catalytic Tele-phosphohistidine intermediate. Glu-88 serves as the catalytic Proton donor/acceptor.

Belongs to the phosphoglycerate mutase family. BPG-dependent PGAM subfamily.

The enzyme catalyses (2R)-2-phosphoglycerate = (2R)-3-phosphoglycerate. The protein operates within carbohydrate degradation; glycolysis; pyruvate from D-glyceraldehyde 3-phosphate: step 3/5. Its function is as follows. Catalyzes the interconversion of 2-phosphoglycerate and 3-phosphoglycerate. The sequence is that of 2,3-bisphosphoglycerate-dependent phosphoglycerate mutase from Arthrobacter sp. (strain FB24).